We begin with the raw amino-acid sequence, 372 residues long: MKYLRHRRPNATLILAIGAFTLLLFSLLVSPPTCKVQEQPPAIPEALAWPTPPTRPAPAPCHANTSMVTHPDFATQPQHVQNFLLYRHCRHFPLLQDVPPSKCAQPVFLLLVIKSSPSNYVRRELLRRTWGRERKVRGLQLRLLFLVGTASNPHEARKVNRLLELEAQTHGDILQWDFHDSFFNLTLKQVLFLQWQETRCANASFVLNGDDDVFAHTDNMVFYLQDHDPGRHLFVGQLIQNVGPIRAFWSKYYVPEVVTQNERYPPYCGGGGFLLSRFTAAALRRAAHVLDIFPIDDVFLGMCLELEGLKPASHSGIRTSGVRAPSQRLSSFDPCFYRDLLLVHRFLPYEMLLMWDALNQPNLTCGNQTQIY.

Over 1–10 (MKYLRHRRPN) the chain is Cytoplasmic. A helical; Signal-anchor for type II membrane protein transmembrane segment spans residues 11 to 31 (ATLILAIGAFTLLLFSLLVSP). Residues 32–372 (PTCKVQEQPP…LTCGNQTQIY (341 aa)) are Lumenal-facing. 5 N-linked (GlcNAc...) asparagine glycosylation sites follow: N64, N184, N202, N362, and N367.

This sequence belongs to the glycosyltransferase 31 family. In terms of tissue distribution, expressed in colon, jejunum, stomach, esophagus, placenta and trachea.

It localises to the golgi apparatus membrane. The catalysed reaction is a 3-O-{beta-D-galactosyl-(1-&gt;3)-[N-acetyl-beta-D-glucosaminyl-(1-&gt;6)]-N-acetyl-alpha-D-galactosaminyl}-L-threonyl-[protein] + UDP-N-acetyl-alpha-D-glucosamine = 3-O-{beta-D-GlcNAc-(1-&gt;3)-beta-D-Gal-(1-&gt;3)-[beta-D-GlcNAc-(1-&gt;6)]-alpha-D-GalNAc}-L-threonyl-[protein] + UDP + H(+). It carries out the reaction 3-O-{beta-D-galactosyl-(1-&gt;3)-[N-acetyl-beta-D-glucosaminyl-(1-&gt;6)]-N-acetyl-alpha-D-galactosaminyl}-L-seryl-[protein] + UDP-N-acetyl-alpha-D-glucosamine = 3-O-{beta-D-GlcNAc-(1-&gt;3)-beta-D-Gal-(1-&gt;3)-[beta-D-GlcNAc-(1-&gt;6)]-alpha-D-GalNAc}-L-seryl-[protein] + UDP + H(+). The enzyme catalyses a beta-D-galactosyl-(1-&gt;4)-N-acetyl-beta-D-glucosaminyl derivative + UDP-N-acetyl-alpha-D-glucosamine = an N-acetyl-beta-D-glucosaminyl-(1-&gt;3)-beta-D-galactosyl-(1-&gt;4)-N-acetyl-beta-D-glucosaminyl derivative + UDP + H(+). The protein operates within protein modification; protein glycosylation. Functionally, beta-1,3-N-acetylglucosaminyltransferase involved in the synthesis of poly-N-acetyllactosamine. Has activity for type 2 oligosaccharides. Also acts as a core1-1,3-N-acetylglucosaminyltransferase (Core1-beta3GlcNAcT) to form the 6-sulfo sialyl Lewis x on extended core1 O-glycans. This Homo sapiens (Human) protein is N-acetyllactosaminide beta-1,3-N-acetylglucosaminyltransferase 3 (B3GNT3).